Reading from the N-terminus, the 86-residue chain is Omega-theraphotoxin-Hhn1f 1 (86 aa).

An N-terminal signal peptide occupies residues 1–21 (MKSIVFVALFGLALLAVVCSA). A propeptide spanning residues 22-50 (SEDAHKELLKEVVRAMVVDKTDAVQAEER) is cleaved from the precursor. Cystine bridges form between C52–C66, C59–C71, and C65–C78.

This sequence belongs to the neurotoxin 10 (Hwtx-1) family. 17 (Hntx-9) subfamily. Expressed by the venom gland.

The protein localises to the secreted. Its function is as follows. Ion channel inhibitor. This chain is Omega-theraphotoxin-Hhn1f 1, found in Cyriopagopus hainanus (Chinese bird spider).